The primary structure comprises 314 residues: 2,3-dihydroxyphenylpropionate/2,3-dihydroxicinnamic acid 1,2-dioxygenase (314 aa).

His115 acts as the Proton donor in catalysis. The active-site Proton acceptor is His179.

This sequence belongs to the LigB/MhpB extradiol dioxygenase family. Homotetramer. Requires Fe(2+) as cofactor.

The enzyme catalyses 3-(2,3-dihydroxyphenyl)propanoate + O2 = (2Z,4E)-2-hydroxy-6-oxonona-2,4-dienedioate + H(+). The catalysed reaction is (2E)-3-(2,3-dihydroxyphenyl)prop-2-enoate + O2 = (2Z,4E,7E)-2-hydroxy-6-oxonona-2,4,7-trienedioate + H(+). It functions in the pathway aromatic compound metabolism; 3-phenylpropanoate degradation. Its function is as follows. Catalyzes the non-heme iron(II)-dependent oxidative cleavage of 2,3-dihydroxyphenylpropionic acid and 2,3-dihydroxicinnamic acid into 2-hydroxy-6-ketononadienedioate and 2-hydroxy-6-ketononatrienedioate, respectively. This is 2,3-dihydroxyphenylpropionate/2,3-dihydroxicinnamic acid 1,2-dioxygenase from Rhodococcus globerulus.